A 591-amino-acid chain; its full sequence is Ketol-acid reductoisomerase, chloroplastic (591 aa).

A disordered region spans residues 1 to 20; that stretch reads MAAATSSIAPSLSCPSPSSS. A chloroplast-targeting transit peptide spans 1-52; that stretch reads MAAATSSIAPSLSCPSPSSSSKTLWSSKARTLALPNIGFLSSSSKSLRSLTA. Thr-53 bears the N-acetylthreonine mark. A KARI N-terminal Rossmann domain is found at 102 to 300; the sequence is VRGGRDLFKH…ALGSPFTFAT (199 aa). Residues 123–130, 156–161, and 195–199 each bind NADP(+); these read GVIGWGSQ, RKGSRS, and SDAAQ. The active site involves His-220. KARI C-terminal knotted domains are found at residues 301-449 and 450-586; these read TLEQ…RPAG and DLGP…RPEL. Mg(2+)-binding residues include Asp-309, Glu-313, Glu-486, and Glu-490. Ser-512 contacts substrate.

This sequence belongs to the ketol-acid reductoisomerase family. Homodimer. The cofactor is Mg(2+).

It is found in the plastid. The protein localises to the chloroplast. It carries out the reaction (2R)-2,3-dihydroxy-3-methylbutanoate + NADP(+) = (2S)-2-acetolactate + NADPH + H(+). It catalyses the reaction (2R,3R)-2,3-dihydroxy-3-methylpentanoate + NADP(+) = (S)-2-ethyl-2-hydroxy-3-oxobutanoate + NADPH + H(+). The protein operates within amino-acid biosynthesis; L-isoleucine biosynthesis; L-isoleucine from 2-oxobutanoate: step 2/4. It participates in amino-acid biosynthesis; L-valine biosynthesis; L-valine from pyruvate: step 2/4. In Arabidopsis thaliana (Mouse-ear cress), this protein is Ketol-acid reductoisomerase, chloroplastic.